The sequence spans 97 residues: Alpha-latrotoxin associated low molecular weight protein 2 (97 aa).

Positions 1–19 (MFKLICIVFIATILSITSA) are cleaved as a signal peptide. 3 disulfides stabilise this stretch: cysteine 36–cysteine 72, cysteine 52–cysteine 68, and cysteine 55–cysteine 81.

Belongs to the arthropod CHH/MIH/GIH/VIH hormone family. Expressed by the venom gland.

Its subcellular location is the secreted. Functionally, may increase the toxicity of alpha-latrotoxin and/or other venom components. Is non-toxic to mice and to the cockroach Periplaneta americana. In Steatoda grossa (False black widow), this protein is Alpha-latrotoxin associated low molecular weight protein 2.